The chain runs to 88 residues: Sec-independent protein translocase protein TatA (88 aa).

A helical transmembrane segment spans residues 3 to 23 (IFGVGLPEVTVILILALLIFG). Basic and acidic residues predominate over residues 56-66 (MKEEDKDESPK). Residues 56–88 (MKEEDKDESPKSIESNQSNEINQEKIDSENSNN) form a disordered region. Residues 67–76 (SIESNQSNEI) are compositionally biased toward polar residues. Basic and acidic residues predominate over residues 77–88 (NQEKIDSENSNN).

The protein belongs to the TatA/E family. In terms of assembly, forms a complex with TatC.

It localises to the cell inner membrane. Its function is as follows. Part of the twin-arginine translocation (Tat) system that transports large folded proteins containing a characteristic twin-arginine motif in their signal peptide across membranes. TatA could form the protein-conducting channel of the Tat system. This chain is Sec-independent protein translocase protein TatA, found in Prochlorococcus marinus (strain MIT 9301).